The sequence spans 1384 residues: DNA-directed RNA polymerase subunit beta (1384 aa).

This sequence belongs to the RNA polymerase beta chain family. As to quaternary structure, the RNAP catalytic core consists of 2 alpha, 1 beta, 1 beta' and 1 omega subunit. When a sigma factor is associated with the core the holoenzyme is formed, which can initiate transcription.

The catalysed reaction is RNA(n) + a ribonucleoside 5'-triphosphate = RNA(n+1) + diphosphate. Functionally, DNA-dependent RNA polymerase catalyzes the transcription of DNA into RNA using the four ribonucleoside triphosphates as substrates. The sequence is that of DNA-directed RNA polymerase subunit beta from Xylella fastidiosa (strain M23).